A 334-amino-acid chain; its full sequence is Large ribosomal subunit protein uL3 (334 aa).

Over residues 1-10 (MGMKKSRPRR) the composition is skewed to basic residues. The tract at residues 1-20 (MGMKKSRPRRGSLAFSPRKR) is disordered.

Belongs to the universal ribosomal protein uL3 family. As to quaternary structure, part of the 50S ribosomal subunit. Forms a cluster with proteins L14 and L24e.

In terms of biological role, one of the primary rRNA binding proteins, it binds directly near the 3'-end of the 23S rRNA, where it nucleates assembly of the 50S subunit. The chain is Large ribosomal subunit protein uL3 from Methanococcus maripaludis (strain C6 / ATCC BAA-1332).